Here is a 575-residue protein sequence, read N- to C-terminus: Epsin-1 (575 aa).

A 1,2-diacyl-sn-glycero-3-phospho-(1D-myo-inositol-4,5-bisphosphate) is bound by residues Lys11, Arg25, Asn30, Arg63, and His73. An ENTH domain is found at 12-144 (NIVHNYSEAE…RDEDRLREER (133 aa)). The disordered stretch occupies residues 150–186 (TKEKLAQTATASSAAVGSGPPPEAEQAWPQSSGEEEL). Over residues 157-167 (TATASSAAVGS) the composition is skewed to low complexity. UIM domains follow at residues 183 to 202 (EEELQLQLALAMSKEEADQP), 208 to 227 (EDDVQLQLALSLSREEHDKE), and 233 to 252 (GDDLRLQMAIEESKRETGGK). Residues 264–575 (FTTPAPPQAS…PAPNTNPFLL (312 aa)) form a disordered region. Tandem repeats lie at residues 274–276 (DPW), 294–296 (DPW), 306–308 (DPW), 319–321 (DPW), 332–334 (DPW), 349–351 (DPW), 367–369 (DPW), and 377–379 (DPW). The interval 274 to 379 (DPWGGPASVP…APAPAFSDPW (106 aa)) is 8 X 3 AA repeats of D-P-W. Composition is skewed to low complexity over residues 279–299 (PASVPTAVPVAAAASDPWGGP) and 306–316 (DPWGGAAPTPA). Over residues 332–346 (DPWGGTPAPAAGEGP) the composition is skewed to low complexity. Residues 367–379 (DPWAPAPAFSDPW) show a composition bias toward low complexity. Phosphoserine is present on Ser382. Positions 401 to 410 (DEFSDFDRLR) match the [DE]-X(1,2)-F-X-X-[FL]-X-X-X-R motif motif. Phosphoserine occurs at positions 418 and 419. Position 420 is a phosphothreonine (Thr420). Residues Ser434, Ser446, and Ser453 each carry the phosphoserine modification. The segment covering 453–467 (SPPPAATPTPTPPTR) has biased composition (pro residues). A phosphothreonine mark is found at Thr459, Thr463, and Thr469. Ser472 bears the Phosphoserine mark. At Thr493 the chain carries Phosphothreonine. 2 tandem repeats follow at residues 501–503 (NPF) and 517–519 (NPF). The interval 501 to 573 (NPFLPSGAPP…GPPAPNTNPF (73 aa)) is 3 X 3 AA repeats of N-P-F. Arg533 is modified (omega-N-methylarginine). The span at 556 to 569 (GLPPMMPPGPPAPN) shows a compositional bias: pro residues. Repeat unit 3 spans residues 571-573 (NPF).

This sequence belongs to the epsin family. As to quaternary structure, monomer. Binds clathrin and ZBTB16/ZNF145. Binds ubiquitinated proteins. Interacts with RALBP1 in a complex also containing NUMB and TFAP2A during interphase and mitosis. Interacts with AP2B1. Interacts with UBQLN2. Interacts with ITSN1. Interacts with AP2A1 and AP2A2. Interacts with REPS2; the interaction is direct. Interacts with EPS15; the interaction is direct. Interacts with ENTREP1. Post-translationally, phosphorylated on serine and/or threonine residues in mitotic cells. Phosphorylation reduces interaction with REPS2, AP-2 and the membrane fraction. Depolarization of synaptosomes results in dephosphorylation. Ubiquitinated.

Its subcellular location is the cytoplasm. It localises to the cell membrane. The protein resides in the nucleus. The protein localises to the membrane. It is found in the clathrin-coated pit. In terms of biological role, binds to membranes enriched in phosphatidylinositol 4,5-bisphosphate (PtdIns(4,5)P2). Modifies membrane curvature and facilitates the formation of clathrin-coated invaginations. Regulates receptor-mediated endocytosis. This Mus musculus (Mouse) protein is Epsin-1 (Epn1).